The sequence spans 68 residues: Basic phospholipase A2 homolog BdipTx-I (68 aa).

A disulfide bridge links Cys-28 with Cys-44.

This sequence belongs to the phospholipase A2 family. Group II subfamily. K49 sub-subfamily. As to expression, expressed by the venom gland.

It is found in the secreted. In terms of biological role, snake venom phospholipase A2 (PLA2) that lacks enzymatic activity. Is myotoxic, induces edema, and causes systemic effects (renal changes that lead to proteinuria) on mice. A model of myotoxic mechanism has been proposed: an apo Lys49-PLA2 is activated by the entrance of a hydrophobic molecule (e.g. fatty acid) at the hydrophobic channel of the protein leading to a reorientation of a monomer. This reorientation causes a transition between 'inactive' to 'active' states, causing alignment of C-terminal and membrane-docking sites (MDoS) side-by-side and putting the membrane-disruption sites (MDiS) in the same plane, exposed to solvent and in a symmetric position for both monomers. The MDoS region stabilizes the toxin on membrane by the interaction of charged residues with phospholipid head groups. Subsequently, the MDiS region destabilizes the membrane with penetration of hydrophobic residues. This insertion causes a disorganization of the membrane, allowing an uncontrolled influx of ions (i.e. calcium and sodium), and eventually triggering irreversible intracellular alterations and cell death. The protein is Basic phospholipase A2 homolog BdipTx-I of Bothrops diporus (Chaco lancehead).